The chain runs to 160 residues: Probable chemoreceptor glutamine deamidase CheD 1 (160 aa).

It belongs to the CheD family.

It carries out the reaction L-glutaminyl-[protein] + H2O = L-glutamyl-[protein] + NH4(+). Probably deamidates glutamine residues to glutamate on methyl-accepting chemotaxis receptors (MCPs), playing an important role in chemotaxis. The polypeptide is Probable chemoreceptor glutamine deamidase CheD 1 (Syntrophus aciditrophicus (strain SB)).